The primary structure comprises 773 residues: Pentatricopeptide repeat-containing protein At1g76280 (773 aa).

PPR repeat units follow at residues 130–165, 166–200, 201–231, 235–269, 332–369, 370–400, 402–436, 524–558, 559–593, 594–628, and 629–663; these read DSRS…RISP, LLPI…RVGK, NGIT…YVNH, DILS…ALRG, LRWS…NLKP, YDST…ISEC, YSYP…KLRP, GTPT…GCPA, DVAT…GFSP, KAVT…EIHL, and DVLS…KVNP.

It belongs to the PPR family. P subfamily.

The chain is Pentatricopeptide repeat-containing protein At1g76280 from Arabidopsis thaliana (Mouse-ear cress).